Here is a 152-residue protein sequence, read N- to C-terminus: Superoxide dismutase [Cu-Zn] 4AP (152 aa).

Positions 45, 47, and 62 each coordinate Cu cation. Residues Cys56 and Cys145 are joined by a disulfide bond. Zn(2+) contacts are provided by His62, His70, His79, and Asp82. Residue His119 participates in Cu cation binding.

The protein belongs to the Cu-Zn superoxide dismutase family. In terms of assembly, homodimer. Cu cation serves as cofactor. Requires Zn(2+) as cofactor.

The protein resides in the cytoplasm. It carries out the reaction 2 superoxide + 2 H(+) = H2O2 + O2. Its function is as follows. Destroys radicals which are normally produced within the cells and which are toxic to biological systems. The polypeptide is Superoxide dismutase [Cu-Zn] 4AP (SODCC.2) (Zea mays (Maize)).